The following is a 55-amino-acid chain: ATP synthase F(0) complex subunit 8 (55 aa).

The helical transmembrane segment at 7–29 (NPWFYIMLMSWLTFSLIIQPELL) threads the bilayer.

Belongs to the ATPase protein 8 family. Component of the ATP synthase complex composed at least of ATP5F1A/subunit alpha, ATP5F1B/subunit beta, ATP5MC1/subunit c (homooctomer), MT-ATP6/subunit a, MT-ATP8/subunit 8, ATP5ME/subunit e, ATP5MF/subunit f, ATP5MG/subunit g, ATP5MK/subunit k, ATP5MJ/subunit j, ATP5F1C/subunit gamma, ATP5F1D/subunit delta, ATP5F1E/subunit epsilon, ATP5PF/subunit F6, ATP5PB/subunit b, ATP5PD/subunit d, ATP5PO/subunit OSCP. ATP synthase complex consists of a soluble F(1) head domain (subunits alpha(3) and beta(3)) - the catalytic core - and a membrane F(0) domain - the membrane proton channel (subunits c, a, 8, e, f, g, k and j). These two domains are linked by a central stalk (subunits gamma, delta, and epsilon) rotating inside the F1 region and a stationary peripheral stalk (subunits F6, b, d, and OSCP).

The protein localises to the mitochondrion membrane. Subunit 8, of the mitochondrial membrane ATP synthase complex (F(1)F(0) ATP synthase or Complex V) that produces ATP from ADP in the presence of a proton gradient across the membrane which is generated by electron transport complexes of the respiratory chain. ATP synthase complex consist of a soluble F(1) head domain - the catalytic core - and a membrane F(1) domain - the membrane proton channel. These two domains are linked by a central stalk rotating inside the F(1) region and a stationary peripheral stalk. During catalysis, ATP synthesis in the catalytic domain of F(1) is coupled via a rotary mechanism of the central stalk subunits to proton translocation. In vivo, can only synthesize ATP although its ATP hydrolase activity can be activated artificially in vitro. Part of the complex F(0) domain. This is ATP synthase F(0) complex subunit 8 from Musophaga violacea (Violet turaco).